Here is a 332-residue protein sequence, read N- to C-terminus: Ferredoxin--NADP reductase 1 (332 aa).

Residues aspartate 35, lysine 43, phenylalanine 48, valine 88, phenylalanine 123, aspartate 284, and threonine 325 each contribute to the FAD site.

It belongs to the ferredoxin--NADP reductase type 2 family. As to quaternary structure, homodimer. FAD is required as a cofactor.

The catalysed reaction is 2 reduced [2Fe-2S]-[ferredoxin] + NADP(+) + H(+) = 2 oxidized [2Fe-2S]-[ferredoxin] + NADPH. The protein is Ferredoxin--NADP reductase 1 of Listeria monocytogenes serovar 1/2a (strain ATCC BAA-679 / EGD-e).